A 359-amino-acid polypeptide reads, in one-letter code: 3-dehydroquinate synthase (359 aa).

Residues D71–K76, G105–D109, T129–T130, K142, K151, and T169–T172 contribute to the NAD(+) site. Residues E184, H247, and H264 each contribute to the Zn(2+) site.

The protein belongs to the sugar phosphate cyclases superfamily. Dehydroquinate synthase family. It depends on Co(2+) as a cofactor. Zn(2+) serves as cofactor. NAD(+) is required as a cofactor.

The protein localises to the cytoplasm. It catalyses the reaction 7-phospho-2-dehydro-3-deoxy-D-arabino-heptonate = 3-dehydroquinate + phosphate. It functions in the pathway metabolic intermediate biosynthesis; chorismate biosynthesis; chorismate from D-erythrose 4-phosphate and phosphoenolpyruvate: step 2/7. Functionally, catalyzes the conversion of 3-deoxy-D-arabino-heptulosonate 7-phosphate (DAHP) to dehydroquinate (DHQ). The polypeptide is 3-dehydroquinate synthase (Thiobacillus denitrificans (strain ATCC 25259 / T1)).